The sequence spans 246 residues: DNA repair protein RecO (246 aa).

Belongs to the RecO family.

Functionally, involved in DNA repair and RecF pathway recombination. The chain is DNA repair protein RecO from Methylobacterium nodulans (strain LMG 21967 / CNCM I-2342 / ORS 2060).